A 201-amino-acid polypeptide reads, in one-letter code: Dermatopontin (201 aa).

The signal sequence occupies residues 1 to 18 (MDLTLLWVLLPLVTTAWG). The residue at position 19 (Gln-19) is a Pyrrolidone carboxylic acid. Residues 19-186 (QYGGYGYPYQ…AVERDRQWKF (168 aa)) are 2 X 53-55 AA tandem repeats. A Sulfotyrosine modification is found at Tyr-23. Repeat copies occupy residues 26–79 (PYQQ…ACMP), 70–75 (DRQWNY), 80–135 (TPQS…CCRY), and 125–130 (DREWQF). 5 disulfides stabilise this stretch: Cys-50/Cys-77, Cys-90/Cys-132, Cys-106/Cys-133, Cys-139/Cys-196, and Cys-143/Cys-189. A 3 X 6 AA tandem repeats of D-R-[EQ]-W-[NQK]-[FY] region spans residues 70–186 (DRQWNYACMP…AVERDRQWKF (117 aa)). Sulfotyrosine is present on residues Tyr-162, Tyr-164, and Tyr-167. The 2-3 repeat unit spans residues 181–186 (DRQWKF). Residue Tyr-194 is modified to Sulfotyrosine.

This sequence belongs to the dermatopontin family. In terms of assembly, interacts with TGFB1, DCN and collagen. Post-translationally, sulfated on tyrosine residue(s).

It localises to the secreted. Its subcellular location is the extracellular space. The protein localises to the extracellular matrix. Its function is as follows. Seems to mediate adhesion by cell surface integrin binding. May serve as a communication link between the dermal fibroblast cell surface and its extracellular matrix environment. Enhances TGFB1 activity. Inhibits cell proliferation. Accelerates collagen fibril formation, and stabilizes collagen fibrils against low-temperature dissociation. This is Dermatopontin (Dpt) from Mus musculus (Mouse).